The following is a 749-amino-acid chain: Transcription factor RFX3 (749 aa).

The RFX-type winged-helix DNA-binding region spans 183 to 258 (HLQWLLDNYE…YHYYGIRVKP (76 aa)). Residues 663–699 (VSPGNLDKDEGSEVESETDEDLDDSSEPRAKREKTEL) are disordered. A compositionally biased stretch (acidic residues) spans 674–687 (SEVESETDEDLDDS). Positions 688 to 698 (SEPRAKREKTE) are enriched in basic and acidic residues.

This sequence belongs to the RFX family. Heterodimer; heterodimerizes with RFX1 and RFX2, and RFX6. In terms of tissue distribution, expressed in ciliated cells of the node and in the ciliated ependymal cells of the subcommissural organ (SCO), choroid plexuses (CP) and ventricular walls during embryonic and postnatal development. Expressed in developing and mature pancreatic endocrine cells during embryogenesis and in adults (at protein level).

The protein resides in the nucleus. Transcription factor required for ciliogenesis and islet cell differentiation during endocrine pancreas development. Essential for the differentiation of nodal monocilia and left-right asymmetry specification during embryogenesis. Required for the biogenesis of motile cilia by governing growth and beating efficiency of motile cells. Also required for ciliated ependymal cell differentiation. Together with RFX6, participates in the differentiation of 4 of the 5 islet cell types during endocrine pancreas development, with the exception of pancreatic PP (polypeptide-producing) cells. Regulates transcription by forming a heterodimer with another RFX protein and binding to the X-box in the promoter of target genes. Regulates the expression of genes involved in ciliary assembly (DYNC2LI1, FOXJ1 and BBS4) and genes involved in ciliary motility (DNAH11, DNAH9 and DNAH5). Represses transcription of MAP1A in non-neuronal cells but not in neuronal cells. This Mus musculus (Mouse) protein is Transcription factor RFX3 (Rfx3).